A 198-amino-acid polypeptide reads, in one-letter code: Holliday junction branch migration complex subunit RuvA (198 aa).

Residues 1–63 (MYDYIKGQLT…EDAHLLFGFH (63 aa)) are domain I. The segment at 64–142 (TEDEKDVFLK…EAPQETGHTK (79 aa)) is domain II. Residues 143–147 (ARSNK) form a flexible linker region. A domain III region spans residues 148–198 (AGNTQLDEAIEALLALGYTATELKKIRAFFEGTSETAEQYIKSALKLLMKG).

It belongs to the RuvA family. In terms of assembly, homotetramer. Forms an RuvA(8)-RuvB(12)-Holliday junction (HJ) complex. HJ DNA is sandwiched between 2 RuvA tetramers; dsDNA enters through RuvA and exits via RuvB. An RuvB hexamer assembles on each DNA strand where it exits the tetramer. Each RuvB hexamer is contacted by two RuvA subunits (via domain III) on 2 adjacent RuvB subunits; this complex drives branch migration. In the full resolvosome a probable DNA-RuvA(4)-RuvB(12)-RuvC(2) complex forms which resolves the HJ.

The protein resides in the cytoplasm. In terms of biological role, the RuvA-RuvB-RuvC complex processes Holliday junction (HJ) DNA during genetic recombination and DNA repair, while the RuvA-RuvB complex plays an important role in the rescue of blocked DNA replication forks via replication fork reversal (RFR). RuvA specifically binds to HJ cruciform DNA, conferring on it an open structure. The RuvB hexamer acts as an ATP-dependent pump, pulling dsDNA into and through the RuvAB complex. HJ branch migration allows RuvC to scan DNA until it finds its consensus sequence, where it cleaves and resolves the cruciform DNA. The sequence is that of Holliday junction branch migration complex subunit RuvA from Streptococcus pyogenes serotype M49 (strain NZ131).